The primary structure comprises 345 residues: GTPase Obg (345 aa).

One can recognise an Obg domain in the interval 1 to 159; it reads MKFLDQAKVY…KWIWLRLKLI (159 aa). In terms of domain architecture, OBG-type G spans 160 to 327; the sequence is ADAGLVGLPN…ALRALLAVID (168 aa). GTP contacts are provided by residues 166-173, 191-195, 212-215, 279-282, and 308-310; these read GLPNAGKS, FTTLH, DIPG, SKID, and SSQ. Mg(2+) contacts are provided by S173 and T193.

It belongs to the TRAFAC class OBG-HflX-like GTPase superfamily. OBG GTPase family. Monomer. Mg(2+) serves as cofactor.

It is found in the cytoplasm. In terms of biological role, an essential GTPase which binds GTP, GDP and possibly (p)ppGpp with moderate affinity, with high nucleotide exchange rates and a fairly low GTP hydrolysis rate. Plays a role in control of the cell cycle, stress response, ribosome biogenesis and in those bacteria that undergo differentiation, in morphogenesis control. The sequence is that of GTPase Obg from Azorhizobium caulinodans (strain ATCC 43989 / DSM 5975 / JCM 20966 / LMG 6465 / NBRC 14845 / NCIMB 13405 / ORS 571).